Reading from the N-terminus, the 269-residue chain is Endo-1,3-1,4-beta-glycanase ExoK (269 aa).

A signal peptide spans 1–29 (MTIDRYRRFARLAFIATLPLAGLATAAAA). The 213-residue stretch at 40–252 (DDFDTLDTRV…RVAFTAAGDE (213 aa)) folds into the GH16 domain. The Nucleophile role is filled by E138. Catalysis depends on E142, which acts as the Proton donor.

This sequence belongs to the glycosyl hydrolase 16 family.

Its subcellular location is the secreted. Its pathway is glycan metabolism; exopolysaccharide biosynthesis. Cleaves high molecular weight succinoglycan to yield LMW succinoglycan. Dynamically regulates the molecular weight distribution of succinoglycan by cleaving nascent succinoglycan only during a limited period after its synthesis, perhaps before it undergoes a time-dependent change in its conformation or aggregation state. This chain is Endo-1,3-1,4-beta-glycanase ExoK (exoK), found in Rhizobium meliloti (strain 1021) (Ensifer meliloti).